The chain runs to 1007 residues: uncharacterized protein (1007 aa).

An N-terminal signal peptide occupies residues methionine 1 to alanine 51. Low complexity predominate over residues methionine 1–alanine 96. Disordered stretches follow at residues methionine 1–isoleucine 186, threonine 200–proline 224, asparagine 387–isoleucine 533, threonine 543–asparagine 562, glutamate 578–isoleucine 645, threonine 655–asparagine 674, and aspartate 712–isoleucine 757. The segment covering aspartate 118–threonine 163 has biased composition (polar residues). The segment covering histidine 167–glutamate 176 has biased composition (basic and acidic residues). 2 stretches are compositionally biased toward polar residues: residues serine 177–isoleucine 186 and threonine 200–isoleucine 210. Low complexity predominate over residues valine 423–valine 442. Polar residues predominate over residues serine 443 to glutamine 453. Residues isoleucine 469–serine 491 are compositionally biased toward low complexity. Positions aspartate 507 to glutamate 523 are enriched in polar residues. The span at alanine 597–serine 618 shows a compositional bias: acidic residues. A compositionally biased stretch (low complexity) spans aspartate 619–glutamate 635. Residues aspartate 712–serine 730 are compositionally biased toward acidic residues. Residues threonine 732–asparagine 743 are compositionally biased toward polar residues.

This sequence belongs to the chlamydial CPn_0572/CT_456/TC_0741 family.

This is an uncharacterized protein from Chlamydia muridarum (strain MoPn / Nigg).